Here is a 77-residue protein sequence, read N- to C-terminus: U8-lycotoxin-Ls1d (77 aa).

Residues 1 to 20 form the signal peptide; it reads MKLIIFTGLVLFAIVSLIEA. The propeptide occupies 21 to 26; the sequence is QAENEK.

It belongs to the neurotoxin 19 (CSTX) family. 08 (U8-Lctx) subfamily. Post-translationally, contains 4 disulfide bonds. In terms of tissue distribution, expressed by the venom gland.

The protein localises to the secreted. In Lycosa singoriensis (Wolf spider), this protein is U8-lycotoxin-Ls1d.